A 559-amino-acid polypeptide reads, in one-letter code: MPLVKRNIDPRHLCHTALPRGIKNELECVTNISLANIIRQLSSLSKYAEDIFGELFNEAHSFSFRVNSLQERVDRLSVSVTQLDPKEEELSLQDITMRKAFRSSTIQDQQLFDRKTLPIPLQETYDVCEQPPPLNVLTPYRDDGKEGLKFYTNPSYFFDLWKEKMLQDTEDKRKEKRKQKQKNLDRPHEPEKVPRAPHDRRREWQKLAQGPELAEDDADLLHKHIEVANGPASHFETRPQTYVDHMDGSYSLSALPFSQMSELLSRAEERVLVRPHEPPPPPPMHAAGDARPTPTCVSSAAGLIENRPQSPAAGRTPVFVSPTPPPPPPPLPSALSTSSLRASMTSTPPPPVPPPPPPPAPALQAPAVPPPPAPLQIAPGVLHPAPPPIAPPLVQPSPPVARAAPVCETVPVHPLPQGEVQGLPPPPPPPPLPPPGIRPSSPVTVAALAHPPSGLHPTPSPAPGPHAPLMPPSPPSQVLPASEPKRHPSTLPVISDARSVLLEAIRKGIQLRKVEEQREQEAKHERIENDVATILSRRIAVEYSDSEDDSEFDEVDWLE.

3 disordered regions span residues 169–202 (TEDK…DRRR), 307–400 (RPQS…SPPV), and 412–492 (VHPL…STLP). The span at 182–202 (KNLDRPHEPEKVPRAPHDRRR) shows a compositional bias: basic and acidic residues. Pro residues predominate over residues 322 to 332 (PTPPPPPPPLP). The segment covering 333-346 (SALSTSSLRASMTS) has biased composition (low complexity). The residue at position 341 (R341) is an Asymmetric dimethylarginine; alternate. An Omega-N-methylarginine; alternate modification is found at R341. 4 stretches are compositionally biased toward pro residues: residues 347-374 (TPPP…PPAP), 384-399 (PAPP…PSPP), 423-437 (LPPP…PPGI), and 458-477 (TPSP…PPSQ). A Phosphoserine modification is found at S489. In terms of domain architecture, WH2 spans 497–514 (ARSVLLEAIRKGIQLRKV).

Belongs to the SCAR/WAVE family. In terms of assembly, component of the WAVE1 complex composed of ABI2, CYFIP1 or CYFIP2, BRK1, NCKAP1 and WASF1/WAVE1. Within the complex, a heterodimer containing NCKAP1 and CYFIP1 interacts with a heterotrimer formed by WAVE1, ABI2 and BRK1. CYFIP2 binds to activated RAC1 which causes the complex to dissociate, releasing activated WASF1. The complex can also be activated by NCK1. Binds actin and the Arp2/3 complex. Interacts with BAIAP2. Interacts with SHANK3; the interaction mediates the association of SHANK3 with the WAVE1 complex. Interacts with ABI1 (via N-terminus). Interacts with SORBS2; this interaction greatly enhances phosphorylation by ABL1 and dephosphorylation by PTPN12 and might mediate partial to focal adhesion sites. As to expression, expressed in hippocampal neurons (at protein level).

The protein localises to the cytoplasm. The protein resides in the cytoskeleton. It localises to the synapse. It is found in the cell junction. Its subcellular location is the focal adhesion. Its function is as follows. Downstream effector molecule involved in the transmission of signals from tyrosine kinase receptors and small GTPases to the actin cytoskeleton. Promotes formation of actin filaments. Part of the WAVE complex that regulates lamellipodia formation. The WAVE complex regulates actin filament reorganization via its interaction with the Arp2/3 complex. As component of the WAVE1 complex, required for BDNF-NTRK2 endocytic trafficking and signaling from early endosomes. Also involved in the regulation of mitochondrial dynamics. The sequence is that of Actin-binding protein WASF1 (Wasf1) from Rattus norvegicus (Rat).